Consider the following 546-residue polypeptide: Phosphomethylpyrimidine synthase (546 aa).

Positions 1-19 (MSTPSSRSQAPETVTTGPI) are enriched in polar residues. Residues 1–20 (MSTPSSRSQAPETVTTGPIQ) form a disordered region. Residues N146, M175, Y204, H240, 260–262 (SRG), 301–304 (DGLR), and E340 contribute to the substrate site. H344 contacts Zn(2+). A substrate-binding site is contributed by Y367. H408 is a Zn(2+) binding site. 3 residues coordinate [4Fe-4S] cluster: C488, C491, and C496.

It belongs to the ThiC family. Requires [4Fe-4S] cluster as cofactor.

It carries out the reaction 5-amino-1-(5-phospho-beta-D-ribosyl)imidazole + S-adenosyl-L-methionine = 4-amino-2-methyl-5-(phosphooxymethyl)pyrimidine + CO + 5'-deoxyadenosine + formate + L-methionine + 3 H(+). The protein operates within cofactor biosynthesis; thiamine diphosphate biosynthesis. Its function is as follows. Catalyzes the synthesis of the hydroxymethylpyrimidine phosphate (HMP-P) moiety of thiamine from aminoimidazole ribotide (AIR) in a radical S-adenosyl-L-methionine (SAM)-dependent reaction. The sequence is that of Phosphomethylpyrimidine synthase from Mycobacteroides abscessus (strain ATCC 19977 / DSM 44196 / CCUG 20993 / CIP 104536 / JCM 13569 / NCTC 13031 / TMC 1543 / L948) (Mycobacterium abscessus).